A 1025-amino-acid polypeptide reads, in one-letter code: DNA ligase 4 (1025 aa).

The tract at residues 1-36 (MMQPTPAPSSAPGSPQRTQAEPEMETPSYPQPPQNV) is disordered. ATP contacts are provided by glutamate 289, lysine 291, leucine 292, arginine 296, glutamate 349, phenylalanine 387, glutamate 447, lysine 452, lysine 469, and lysine 471. Lysine 291 functions as the N6-AMP-lysine intermediate in the catalytic mechanism. Glutamate 349 contributes to the Mg(2+) binding site. Position 447 (glutamate 447) interacts with Mg(2+). Positions 667-763 (VKTDIFNGMK…EPAPFKKKYF (97 aa)) constitute a BRCT 1 domain. The segment at 773–904 (ADEYNEDDGE…TTPDVDGDVK (132 aa)) is disordered. Acidic residues-rich tracts occupy residues 775 to 785 (EYNEDDGEEEG) and 806 to 816 (SETEDEDEEQA). The span at 817–838 (PEIKEEQDGELHEWLKVDDRKS) shows a compositional bias: basic and acidic residues. The segment covering 845-870 (DEEDSVTEDDSDNADVADEEEPDLDD) has biased composition (acidic residues). Positions 891-904 (RHRETTPDVDGDVK) are enriched in basic and acidic residues. One can recognise a BRCT 2 domain in the interval 915–1025 (DPDVIFKHLC…TLLDEEEFAP (111 aa)).

It belongs to the ATP-dependent DNA ligase family. Requires Mg(2+) as cofactor.

It is found in the nucleus. The enzyme catalyses ATP + (deoxyribonucleotide)n-3'-hydroxyl + 5'-phospho-(deoxyribonucleotide)m = (deoxyribonucleotide)n+m + AMP + diphosphate.. In terms of biological role, DNA ligase involved in DNA non-homologous end joining (NHEJ); required for double-strand break (DSB) repair. The polypeptide is DNA ligase 4 (LIG4) (Coprinopsis cinerea (Inky cap fungus)).